Consider the following 1122-residue polypeptide: MKKLIFKLSVGITPLALIGLGSFGLAVSGAKPNNLKPVNQVGEMNSQGQSNLLEKARRWRNSNFTSLSIDGTNPGALVLTGSKSISRIDLYGNVIWTFDPGNTNDLTGKVGFYDANNRLTAFSGDVPFNVSDLSSKTVVEATQDQEDPNVFYLLLIPDAAVQQEQKTKDQVFENYFMSDAPATGDTSAEGSATPAGGGSSSSAAGGGAVAPAAASSTARLVEEGNSAGMGTMTPTASTSETVIDYNSDQNKIPKPKTLLDSSESSESINGGRTYANINTQNNLQGVIVKVNENLFNSENPFAVENMAFIKPKDMVDNYPSTWTQGSANGKMTNVLQFYKHDNPNAVNNRFYRAKYYPKRLETQTTTPLIDSSFSPYEHPEWYEDNQFVMPWMQYITNLGGLYAKDGMVYLFGGNGTWVNNESALSIGVFRTKFENRTAEAPGNTKTVGYPYGILLSAISFDATRNGLALAPASLGQDVGYHFVPRLAVGGVSSPRGANGNIFLGSAITWGTNGGNFLDTKWHSPAVIEDAPTTFVTVNSSGALQNSGNPQPTSTPMPNSNGNESIPYRWTNSYDYNSVRFAALISKPAGGNTKQVESLFTTALKLDTLNSLPNKFTQENNIFFSYAMLDGRQWSLGTRKDSAWLTTNTINNFTYNTQQQLASTVAGENANPRNILNALTTAKGFDRRDIGNVVYTYSNNTNKFTYYYQVGGAITTWPEVQVNYKTSANITYYNLTRTDFGSTTPATQDANTVSSKLNGAYLSSTGDQQGWYNGSIYVKKASFTPSSQGYTWQDFKGLTTTASNAVISNWTKAGYSIRPDDDTVFNVSKIPFEKEITAAVNVRSLDSYYVQLNGETSVNTVARVSPDSSALALNPNRITNPLMNRDNVIGQGAFISRNDIPSSFFENKINDIVTTEADGKEVLDSKYINSIYRYTPPQNNPDIRLRLLVIDRSRATNDFIKLLPQVLVDGEYVAVPQANSVFVSDQEFTGFDALPGYVLPVAISIPIIIIALALALGLGIGIPMSQNRKMLKQGFAISNKKVDILTTAVGSVFKQIINRTSVTNIKKTPQMLQANKKDGASSPSKPSAPAAKKPAGPTKPSAPGAKPTAPAKPKAPAPTKKIE.

Residues 1–26 (MKKLIFKLSVGITPLALIGLGSFGLA) form the signal peptide. 3 disordered regions span residues 182–208 (ATGDTSAEGSATPAGGGSSSSAAGGGA), 244–273 (DYNSDQNKIPKPKTLLDSSESSESINGGRT), and 541–562 (GALQNSGNPQPTSTPMPNSNGN). Gly residues predominate over residues 195 to 208 (AGGGSSSSAAGGGA). The segment covering 259–273 (LDSSESSESINGGRT) has biased composition (polar residues). Residues 1001-1021 (AISIPIIIIALALALGLGIGI) form a helical membrane-spanning segment. The disordered stretch occupies residues 1066–1122 (KTPQMLQANKKDGASSPSKPSAPAAKKPAGPTKPSAPGAKPTAPAKPKAPAPTKKIE). Low complexity predominate over residues 1079 to 1122 (ASSPSKPSAPAAKKPAGPTKPSAPGAKPTAPAKPKAPAPTKKIE).

It belongs to the adhesin P1 family.

Its subcellular location is the cell membrane. Its function is as follows. Could be involved in cytadherence. This Mycoplasmoides gallisepticum (strain R(low / passage 15 / clone 2)) (Mycoplasma gallisepticum) protein is Adhesin P1 (gapA).